Reading from the N-terminus, the 30-residue chain is GIPCAESCVYIPCITAALGCSCKNKVCYRN.

The cyclopeptide (Gly-Asn) cross-link spans 1–30 (GIPCAESCVYIPCITAALGCSCKNKVCYRN). 3 disulfides stabilise this stretch: Cys4/Cys20, Cys8/Cys22, and Cys13/Cys27.

It belongs to the cyclotide family. Bracelet subfamily. In terms of processing, this is a cyclic peptide.

Probably participates in a plant defense mechanism. This is Cyclotide mden-G from Melicytus dentatus (Tree violet).